Reading from the N-terminus, the 256-residue chain is Small ribosomal subunit protein uS2 (256 aa).

Belongs to the universal ribosomal protein uS2 family.

In Brucella melitensis biotype 1 (strain ATCC 23456 / CCUG 17765 / NCTC 10094 / 16M), this protein is Small ribosomal subunit protein uS2.